The sequence spans 379 residues: MAAAAPPVLRGLRDAAMVGPCRGGGEPPGWATNKLGGRADALPSVRPGCPRCGACGAALAHLVQVYCPLGASPFHRLANVFACAESACWGRPQSWKVLRSQSLEARGQDALGCGSKQKEECNFSAKDWCAEADDWGGCDGTESSTCALQMLGLNAGMSSSASEEAQCVSQLQELHLSEAADVSGSLNTDLLLREEMVMATSAPVFHSYYISVVDEADYAGFLDTDHANKLLKEYQQREGVDLEHLMSESFAGEDSNEKYEKTKVRSGDHTFHKFMKRISVCPEQILRYSWGGQPLFITCPPANFDNSIPACSNCGSNRVFEFQLMPALVSMLWGDADLSVEFGTVIVYTCERSCWPTNQQTPLEEFIFVQEDPDQKLFK.

This is Programmed cell death protein 2-like (PDCD2L) from Gallus gallus (Chicken).